Here is a 277-residue protein sequence, read N- to C-terminus: MAAVSVFQPPVGGFSFDNCRRNAVLEADFAKKGFKLPKARKTGTTIAGVVYKDGIVLGADTRATEGMVVADKNCSKIHFISPNIYCCGAGTAADTDMTTQLISSNLELHSLTTGRLPRVVTANRMLKQMLFRYQGYIGAALVLGGVDVTGPHLYSIYPHGSTDKLPYVTMGSGSLAAMAVFEDKFRPDMEEEEAKKLVSEAIAAGIFNDLGSGSNIDLCVISKSKLDFLRPFSVPNKKGTRLGRYRCEKGTTAVLTEKVTPLEIEVLEETVQTMDTS.

Residues 1–43 constitute a propeptide, removed in mature form; that stretch reads MAAVSVFQPPVGGFSFDNCRRNAVLEADFAKKGFKLPKARKTG. The active-site Nucleophile is the T44.

It belongs to the peptidase T1B family. As to quaternary structure, the 26S proteasome consists of a 20S proteasome core and two 19S regulatory subunits. The 20S proteasome core is a barrel-shaped complex made of 28 subunits that are arranged in four stacked rings. The two outer rings are each formed by seven alpha subunits, and the two inner rings are formed by seven beta subunits. The proteolytic activity is exerted by three beta-subunits PSMB5, PSMB6 and PSMB7.

Its subcellular location is the cytoplasm. It localises to the nucleus. It carries out the reaction Cleavage of peptide bonds with very broad specificity.. Component of the 20S core proteasome complex involved in the proteolytic degradation of most intracellular proteins. This complex plays numerous essential roles within the cell by associating with different regulatory particles. Associated with two 19S regulatory particles, forms the 26S proteasome and thus participates in the ATP-dependent degradation of ubiquitinated proteins. The 26S proteasome plays a key role in the maintenance of protein homeostasis by removing misfolded or damaged proteins that could impair cellular functions, and by removing proteins whose functions are no longer required. Associated with the PA200 or PA28, the 20S proteasome mediates ubiquitin-independent protein degradation. This type of proteolysis is required in several pathways including spermatogenesis (20S-PA200 complex) or generation of a subset of MHC class I-presented antigenic peptides (20S-PA28 complex). Within the 20S core complex, PSMB7 displays a trypsin-like activity. This Mus musculus (Mouse) protein is Proteasome subunit beta type-7 (Psmb7).